The following is a 259-amino-acid chain: MENVYISSYSSNEQTSMAVTATDIRELLSQYVDDANLEDLIEWAMEKSSKYYIKNIGNTKSNIEETKFESKNNIGIEYSKDSRNKLSYRNKPSIATNLEYKTLCDMIKGTSGTEKEFLRYLLFGIKCIKKGVEYNIDKIKDVSYNDYFNVLDEKYNTPCPNCKSRNTTPMMIQTRAADEPPLVRHACRDCKQHFKPPKFRAFRNLNVTTQSIHENKEITEILPDNNPSPPESPEPASPIDDGLIRATFDRNDEPPEDDE.

The TFIIS-type zinc finger occupies 155-195 (YNTPCPNCKSRNTTPMMIQTRAADEPPLVRHACRDCKQHFK). Zn(2+)-binding residues include Cys159, Cys162, Cys187, and Cys190. The segment at 220 to 259 (EILPDNNPSPPESPEPASPIDDGLIRATFDRNDEPPEDDE) is disordered. Positions 226–236 (NPSPPESPEPA) are enriched in pro residues.

The protein belongs to the poxviridae DNA-directed RNA polymerase 30 kDa subunit family. In terms of assembly, the DNA-dependent RNA polymerase (vRNAP) consists of eight subunits encoded by early viral genes and termed according to their apparent molecular masses Rpo147, Rpo132, Rpo35, Rpo30, Rpo22, Rpo19, Rpo18, and Rpo7. The same holoenzyme, with the addition of the transcription-specificity factor RAP94, is used for early gene expression.

The protein resides in the virion. It localises to the host cytoplasm. The enzyme catalyses RNA(n) + a ribonucleoside 5'-triphosphate = RNA(n+1) + diphosphate. Functionally, part of the DNA-dependent RNA polymerase which catalyzes the transcription of viral DNA into RNA using the four ribonucleoside triphosphates as substrates. Responsible for the transcription of early, intermediate and late genes. DNA-dependent RNA polymerase associates with the early transcription factor (ETF), itself composed of OPG118 and OPG134, thereby allowing the early genes transcription. Late transcription, and probably also intermediate transcription, require newly synthesized RNA polymerase. The chain is DNA-directed RNA polymerase 30 kDa polypeptide (OPG066) from Bos taurus (Bovine).